The sequence spans 309 residues: Porphobilinogen deaminase (309 aa).

The residue at position 240 (C240) is an S-(dipyrrolylmethanemethyl)cysteine.

It belongs to the HMBS family. As to quaternary structure, monomer. Dipyrromethane is required as a cofactor.

It carries out the reaction 4 porphobilinogen + H2O = hydroxymethylbilane + 4 NH4(+). The protein operates within porphyrin-containing compound metabolism; protoporphyrin-IX biosynthesis; coproporphyrinogen-III from 5-aminolevulinate: step 2/4. Functionally, tetrapolymerization of the monopyrrole PBG into the hydroxymethylbilane pre-uroporphyrinogen in several discrete steps. This is Porphobilinogen deaminase from Lawsonia intracellularis (strain PHE/MN1-00).